The primary structure comprises 409 residues: Beta-glucanase (409 aa).

A signal peptide spans 1 to 31 (MRKNRGFSFSSKAVMMCCLAFLLIPASFAFA). Glu95 acts as the Proton donor in catalysis. Asp156 acts as the Nucleophile in catalysis.

Belongs to the glycosyl hydrolase 8 (cellulase D) family.

The enzyme catalyses Hydrolysis of (1-&gt;4)-beta-D-glucosidic linkages in beta-D-glucans containing (1-&gt;3)- and (1-&gt;4)-bonds.. The sequence is that of Beta-glucanase (bgc) from Niallia circulans (Bacillus circulans).